The chain runs to 187 residues: Threonylcarbamoyl-AMP synthase (187 aa).

The 185-residue stretch at 3 to 187 (QVLPADAAEL…ARSGTVIREG (185 aa)) folds into the YrdC-like domain.

Belongs to the SUA5 family. TsaC subfamily.

It localises to the cytoplasm. The enzyme catalyses L-threonine + hydrogencarbonate + ATP = L-threonylcarbamoyladenylate + diphosphate + H2O. In terms of biological role, required for the formation of a threonylcarbamoyl group on adenosine at position 37 (t(6)A37) in tRNAs that read codons beginning with adenine. Catalyzes the conversion of L-threonine, HCO(3)(-)/CO(2) and ATP to give threonylcarbamoyl-AMP (TC-AMP) as the acyladenylate intermediate, with the release of diphosphate. This is Threonylcarbamoyl-AMP synthase from Shewanella pealeana (strain ATCC 700345 / ANG-SQ1).